The following is a 738-amino-acid chain: Alcohol dehydrogenase (quinone), dehydrogenase subunit (738 aa).

Residues 1-35 (MISAVFGKRRSLSRTLTAGTICAALISGYATMASA) form the signal peptide. Glu-97 serves as a coordination point for pyrroloquinoline quinone. Cys-143 and Cys-144 are oxidised to a cystine. Arg-149 is a pyrroloquinoline quinone binding site. Residue Glu-217 participates in Ca(2+) binding. Thr-278 serves as a coordination point for pyrroloquinoline quinone. Residues Asn-298 and Asp-343 each contribute to the Ca(2+) site. Asp-343 functions as the Proton acceptor in the catalytic mechanism. Residues Lys-370 and Ile-584 each coordinate pyrroloquinoline quinone. A Cytochrome c domain is found at 634 to 738 (FDSKRTDNGY…NADGIPEQLP (105 aa)). Cys-650, Cys-653, His-654, and Met-693 together coordinate heme c.

The protein belongs to the bacterial PQQ dehydrogenase family. In terms of assembly, the alcohol dehydrogenase multicomponent enzyme system is composed of a dehydrogenase subunit I (AdhA) and a cytochrome c subunit II (AdhB). Pyrroloquinoline quinone serves as cofactor. Ca(2+) is required as a cofactor. It depends on heme c as a cofactor.

The protein localises to the cell membrane. The enzyme catalyses ethanol + a ubiquinone = a ubiquinol + acetaldehyde. In terms of biological role, dehydrogenase component of the alcohol dehydrogenase multicomponent enzyme system which is involved in the production of acetic acid and in the ethanol oxidase respiratory chain. Quinohemoprotein alcohol dehydrogenase (ADH) catalyzes the oxidation of ethanol to acetaldehyde by transferring electrons to the ubiquinone embedded in the membrane phospholipids. The electrons transfer from ethanol to membranous ubiquinone occurs from pyrroloquinoline quinone (PQQ) to one heme c in subunit I (AdhA), and finally to two heme c in subunit II (AdhB). Besides ubiquinone reduction, ADH also has a ubiquinol (QH2) oxidation reaction which mediates electron transfer from ubiquinol to the non-energy generating bypass oxidase system. The electrons transfer occurs from ubiquinol (QH2) to the additional heme c within subunit II (AdhB). This is Alcohol dehydrogenase (quinone), dehydrogenase subunit (adhA) from Gluconacetobacter polyoxogenes (Acetobacter polyoxogenes).